The primary structure comprises 38 residues: Large ribosomal subunit protein bL36 (38 aa).

It belongs to the bacterial ribosomal protein bL36 family.

This chain is Large ribosomal subunit protein bL36, found in Chloroflexus aurantiacus (strain ATCC 29366 / DSM 635 / J-10-fl).